Reading from the N-terminus, the 74-residue chain is Auswaprin-a (74 aa).

Residues 1–24 form the signal peptide; the sequence is MSSGGLLLLLGLLTLWGVLTPVSS. The WAP domain occupies 27 to 71; sequence RPKKPGLCPPRPQKPCVKECKNDWSCSGQQKCCNYGCIDECRDPI. Cystine bridges form between C34–C59, C42–C63, C46–C58, and C52–C67.

It belongs to the venom waprin family. As to expression, expressed by the venom gland.

It is found in the secreted. Functionally, damages membranes of susceptible bacteria. Has no hemolytic activity. Not toxic to mice. Does not inhibit the proteinases elastase and cathepsin G. The chain is Auswaprin-a from Pseudechis australis (Mulga snake).